The primary structure comprises 389 residues: S-adenosylmethionine synthase (389 aa).

His-15 provides a ligand contact to ATP. Asp-17 is a binding site for Mg(2+). Glu-43 is a K(+) binding site. The L-methionine site is built by Glu-56 and Gln-99. Positions 99–109 (QSPDIAQGVNE) are flexible loop. ATP-binding positions include 166 to 168 (DAK), 234 to 235 (RF), Asp-243, 249 to 250 (RK), Ala-266, and Lys-270. Asp-243 contributes to the L-methionine binding site. Lys-274 lines the L-methionine pocket.

The protein belongs to the AdoMet synthase family. Homotetramer; dimer of dimers. Mg(2+) is required as a cofactor. The cofactor is K(+).

The protein resides in the cytoplasm. It carries out the reaction L-methionine + ATP + H2O = S-adenosyl-L-methionine + phosphate + diphosphate. It functions in the pathway amino-acid biosynthesis; S-adenosyl-L-methionine biosynthesis; S-adenosyl-L-methionine from L-methionine: step 1/1. Catalyzes the formation of S-adenosylmethionine (AdoMet) from methionine and ATP. The overall synthetic reaction is composed of two sequential steps, AdoMet formation and the subsequent tripolyphosphate hydrolysis which occurs prior to release of AdoMet from the enzyme. The polypeptide is S-adenosylmethionine synthase (Laribacter hongkongensis (strain HLHK9)).